We begin with the raw amino-acid sequence, 362 residues long: Alpha-tubulin N-acetyltransferase (362 aa).

The 177-residue stretch at 1 to 177 folds into the N-acetyltransferase domain; it reads MQFGCNVAEA…NNFLMLDASI (177 aa). Acetyl-CoA-binding positions include 111–124 and 147–156; these read FYTHETVQRRGIGT and SPKLLAFLSK.

This sequence belongs to the acetyltransferase ATAT1 family.

The catalysed reaction is L-lysyl-[alpha-tubulin] + acetyl-CoA = N(6)-acetyl-L-lysyl-[alpha-tubulin] + CoA + H(+). Functionally, specifically acetylates 'Lys-40' in alpha-tubulin on the lumenal side of microtubules. Promotes microtubule destabilization and accelerates microtubule dynamics; this activity may be independent of acetylation activity. Acetylates alpha-tubulin with a slow enzymatic rate, due to a catalytic site that is not optimized for acetyl transfer. Enters the microtubule through each end and diffuses quickly throughout the lumen of microtubules. Acetylates only long/old microtubules because of its slow acetylation rate since it does not have time to act on dynamically unstable microtubules before the enzyme is released. The protein is Alpha-tubulin N-acetyltransferase of Giardia intestinalis (strain ATCC 50803 / WB clone C6) (Giardia lamblia).